The following is a 259-amino-acid chain: MASTGETLTSQEYIAHHLHHLQVGSGFWTVNIDSMVFSVVLGTLFIWLFRRVAVKATSGVPGKLQCFVEIVFGFVDDTVKGIFHGKNKLIAPLALTIFVWIFLMNAMDLLPIDYLPHLAQISNIPYLRVVPSADVNITLSMALGVFFLILFYSIKIKGIGGFVKELTMTPFNHWAFVPINLLLETVTLISKPISLGLRLFGNMYAGEMIFILIAAMLPWWSQWFLNVPWAIFHILIITLQAFIFMVLTIVYLSMACEEH.

The next 5 helical transmembrane spans lie at 29–49, 89–109, 132–154, 209–229, and 230–250; these read TVNI…IWLF, LIAP…AMDL, SADV…FYSI, IFIL…NVPW, and AIFH…LTIV.

Belongs to the ATPase A chain family. In terms of assembly, F-type ATPases have 2 components, CF(1) - the catalytic core - and CF(0) - the membrane proton channel. CF(1) has five subunits: alpha(3), beta(3), gamma(1), delta(1), epsilon(1). CF(0) has three main subunits: a(1), b(2) and c(9-12). The alpha and beta chains form an alternating ring which encloses part of the gamma chain. CF(1) is attached to CF(0) by a central stalk formed by the gamma and epsilon chains, while a peripheral stalk is formed by the delta and b chains.

The protein resides in the cell inner membrane. Its function is as follows. Key component of the proton channel; it plays a direct role in the translocation of protons across the membrane. The polypeptide is ATP synthase subunit a (Tolumonas auensis (strain DSM 9187 / NBRC 110442 / TA 4)).